A 94-amino-acid polypeptide reads, in one-letter code: Translation initiation factor 1A 2 (94 aa).

The S1-like domain occupies 6–80 (GRRNLRMPND…EKANVEWRYS (75 aa)).

It belongs to the eIF-1A family.

Functionally, seems to be required for maximal rate of protein biosynthesis. Enhances ribosome dissociation into subunits and stabilizes the binding of the initiator Met-tRNA(I) to 40 S ribosomal subunits. The polypeptide is Translation initiation factor 1A 2 (eIF1A2) (Halobacterium salinarum (strain ATCC 700922 / JCM 11081 / NRC-1) (Halobacterium halobium)).